The primary structure comprises 213 residues: Ribosomal RNA small subunit methyltransferase G (213 aa).

Residues glycine 77, methionine 82, 104–106 (EKS), and arginine 145 contribute to the S-adenosyl-L-methionine site.

This sequence belongs to the methyltransferase superfamily. RNA methyltransferase RsmG family.

Its subcellular location is the cytoplasm. The enzyme catalyses guanosine(527) in 16S rRNA + S-adenosyl-L-methionine = N(7)-methylguanosine(527) in 16S rRNA + S-adenosyl-L-homocysteine. Its function is as follows. Specifically methylates the N7 position of guanine in position 527 of 16S rRNA. The protein is Ribosomal RNA small subunit methyltransferase G of Pelagibacter ubique (strain HTCC1062).